A 306-amino-acid chain; its full sequence is Large ribosomal subunit protein mL45 (306 aa).

Belongs to the mitochondrion-specific ribosomal protein mL45 family. As to quaternary structure, component of the mitochondrial ribosome large subunit (39S) which comprises a 16S rRNA and about 50 distinct proteins.

It localises to the mitochondrion. In terms of biological role, component of the mitochondrial large ribosomal subunit (mt-LSU). Within the mitochondrial ribosomes, required to direct the nascent polypeptide toward the tunnel exit and position the exit at a distance from the membrane surface. The sequence is that of Large ribosomal subunit protein mL45 (MRPL45) from Bos taurus (Bovine).